We begin with the raw amino-acid sequence, 449 residues long: Exodeoxyribonuclease 7 large subunit (449 aa).

This sequence belongs to the XseA family. In terms of assembly, heterooligomer composed of large and small subunits.

The protein localises to the cytoplasm. The catalysed reaction is Exonucleolytic cleavage in either 5'- to 3'- or 3'- to 5'-direction to yield nucleoside 5'-phosphates.. Functionally, bidirectionally degrades single-stranded DNA into large acid-insoluble oligonucleotides, which are then degraded further into small acid-soluble oligonucleotides. This chain is Exodeoxyribonuclease 7 large subunit, found in Lacticaseibacillus paracasei (strain ATCC 334 / BCRC 17002 / CCUG 31169 / CIP 107868 / KCTC 3260 / NRRL B-441) (Lactobacillus paracasei).